The following is a 418-amino-acid chain: MFRRLLIATVVGILAAFAVAGFRHAMLLLEWLFLNNDSGSLVNAATNLSPWRRLLTPALGGLAAGLLLMGWQKFTQQRPHAPTDYMEALQTDGQFDYAASLVKSLASLLVVTSGSAIGREGAMILLAALAASCFAQRFTPRQEWKLWIACGAAAGMAAAYRAPLAGSLFIAEVLFGTMMLASLGPVIISAVVALLVSNLINHSDALLYSVQLSVTVQARDYALIISTGVLAGLCGPLLLTLMNACHRGFVSLKLAPPWQLALGGLIVGLLSLFTPAVWGNGYSTVQSFLTAPPLLMIIAGIFLCKLCAVLASSGSGAPGGVFTPTLFIGLAIGMLYGRSLGLWFPDGEEITLLLGLTGMATLLAATTHAPIMSTLMICEMTGEYQLLPGLLIACVIASVISRTLHRDSIYRQHTAQHS.

The Cytoplasmic portion of the chain corresponds to 1-4 (MFRR). A helical transmembrane segment spans residues 5–25 (LLIATVVGILAAFAVAGFRHA). Over 26-53 (MLLLEWLFLNNDSGSLVNAATNLSPWRR) the chain is Periplasmic. Residues 54 to 74 (LLTPALGGLAAGLLLMGWQKF) traverse the membrane as a helical segment. The Cytoplasmic segment spans residues 75 to 145 (TQQRPHAPTD…QRFTPRQEWK (71 aa)). The chain crosses the membrane as a helical span at residues 146–166 (LWIACGAAAGMAAAYRAPLAG). Over 167–177 (SLFIAEVLFGT) the chain is Periplasmic. The chain crosses the membrane as a helical span at residues 178–200 (MMLASLGPVIISAVVALLVSNLI). Topologically, residues 201–221 (NHSDALLYSVQLSVTVQARDY) are cytoplasmic. The helical transmembrane segment at 222-242 (ALIISTGVLAGLCGPLLLTLM) threads the bilayer. Residues 243–257 (NACHRGFVSLKLAPP) are Periplasmic-facing. Residues 258–278 (WQLALGGLIVGLLSLFTPAVW) traverse the membrane as a helical segment. Over 279–290 (GNGYSTVQSFLT) the chain is Cytoplasmic. The chain crosses the membrane as a helical span at residues 291–311 (APPLLMIIAGIFLCKLCAVLA). Over 312–315 (SSGS) the chain is Periplasmic. Residues 316–336 (GAPGGVFTPTLFIGLAIGMLY) traverse the membrane as a helical segment. Residues 337 to 351 (GRSLGLWFPDGEEIT) are Cytoplasmic-facing. A helical membrane pass occupies residues 352 to 372 (LLLGLTGMATLLAATTHAPIM). Residues 373 to 379 (STLMICE) are Periplasmic-facing. A helical membrane pass occupies residues 380-400 (MTGEYQLLPGLLIACVIASVI). The Cytoplasmic portion of the chain corresponds to 401–418 (SRTLHRDSIYRQHTAQHS).

This sequence belongs to the chloride channel (TC 2.A.49) family. ClcB subfamily.

The protein resides in the cell inner membrane. In terms of biological role, probably acts as an electrical shunt for an outwardly-directed proton pump that is linked to amino acid decarboxylation, as part of the extreme acid resistance (XAR) response. This Escherichia coli O157:H7 protein is Voltage-gated ClC-type chloride channel ClcB (clcB).